The chain runs to 895 residues: Alanine--tRNA ligase (895 aa).

H586, H590, C690, and H694 together coordinate Zn(2+).

Belongs to the class-II aminoacyl-tRNA synthetase family. It depends on Zn(2+) as a cofactor.

The protein localises to the cytoplasm. The enzyme catalyses tRNA(Ala) + L-alanine + ATP = L-alanyl-tRNA(Ala) + AMP + diphosphate. In terms of biological role, catalyzes the attachment of alanine to tRNA(Ala) in a two-step reaction: alanine is first activated by ATP to form Ala-AMP and then transferred to the acceptor end of tRNA(Ala). Also edits incorrectly charged Ser-tRNA(Ala) and Gly-tRNA(Ala) via its editing domain. The sequence is that of Alanine--tRNA ligase from Korarchaeum cryptofilum (strain OPF8).